The following is a 535-amino-acid chain: Nuclear/nucleolar GTPase 2 (535 aa).

Residues 1 to 42 (MAKKKERAVNVSGKPRHSLDVNRANDKKGAGGGAGGGGGGRS) form a disordered region. Residues 17-29 (HSLDVNRANDKKG) show a composition bias toward basic and acidic residues. A compositionally biased stretch (gly residues) spans 30 to 41 (AGGGAGGGGGGR). Residues 213 to 374 (WGELYKVIDS…LIDCPGVVYQ (162 aa)) form the CP-type G domain. The tract at residues 261–264 (NKCD) is G4. The G5 stretch occupies residues 290 to 292 (SIN). The tract at residues 323–330 (GYPNVGKS) is G1. The segment at 349 to 353 (GETKV) is G2. The interval 367-370 (DCPG) is G3. A disordered region spans residues 464 to 494 (FFVPPPQQGEDSPSETAEPVEKSDEEGVSSD).

It belongs to the TRAFAC class YlqF/YawG GTPase family. RsgA subfamily. In terms of assembly, interacts (via N-terminus) with the 60S ribosomal proteins RPL10A. This interaction is enhanced by the addition of GTP. As to expression, expressed in roots, shoot apical meristem, leaves, leaf sheaths and flowers.

It localises to the nucleus. The protein resides in the nucleolus. With respect to regulation, the GTPase activity is stimulated in the presence of ribosomes, particularly of the 60S subunit. Functionally, GTPase involved in pre-60S ribosomal subunit maturation. The polypeptide is Nuclear/nucleolar GTPase 2 (Oryza sativa subsp. japonica (Rice)).